A 598-amino-acid polypeptide reads, in one-letter code: UvrABC system protein C (598 aa).

One can recognise a GIY-YIG domain in the interval 11–91 (QKPGVYIMHN…IKKYRPHYNI (81 aa)). In terms of domain architecture, UVR spans 195-230 (KTTIKKLKKDMNRYAKNMEFEKAAMLRDQIDTIKIT).

Belongs to the UvrC family. Interacts with UvrB in an incision complex.

It is found in the cytoplasm. The UvrABC repair system catalyzes the recognition and processing of DNA lesions. UvrC both incises the 5' and 3' sides of the lesion. The N-terminal half is responsible for the 3' incision and the C-terminal half is responsible for the 5' incision. In Methanosphaera stadtmanae (strain ATCC 43021 / DSM 3091 / JCM 11832 / MCB-3), this protein is UvrABC system protein C.